The chain runs to 97 residues: Small ribosomal subunit protein bS6 (97 aa).

Belongs to the bacterial ribosomal protein bS6 family.

Its function is as follows. Binds together with bS18 to 16S ribosomal RNA. The polypeptide is Small ribosomal subunit protein bS6 (Listeria innocua serovar 6a (strain ATCC BAA-680 / CLIP 11262)).